A 123-amino-acid chain; its full sequence is MAKKRYRKVTEGIAHIKATFNNTMISVSDSQGNVLCFRSAGGSGFKGSRKGTPYGAQMASEEVGRLARDNFDMRRIAVRVKGPGAGRDSAIRGLRSAGLEVIHLEDRTPLPHNGCRPRKKRRV.

It belongs to the universal ribosomal protein uS11 family. As to quaternary structure, part of the 30S ribosomal subunit. Interacts with proteins S7 and S18. Binds to IF-3.

Functionally, located on the platform of the 30S subunit, it bridges several disparate RNA helices of the 16S rRNA. Forms part of the Shine-Dalgarno cleft in the 70S ribosome. This Coxiella burnetii (strain CbuK_Q154) (Coxiella burnetii (strain Q154)) protein is Small ribosomal subunit protein uS11.